A 398-amino-acid polypeptide reads, in one-letter code: Glucose-1-phosphate adenylyltransferase (398 aa).

Alpha-D-glucose 1-phosphate-binding positions include tyrosine 100, glycine 165, 180–181 (EK), and serine 191.

This sequence belongs to the bacterial/plant glucose-1-phosphate adenylyltransferase family. Homotetramer.

It carries out the reaction alpha-D-glucose 1-phosphate + ATP + H(+) = ADP-alpha-D-glucose + diphosphate. Its pathway is glycan biosynthesis; glycogen biosynthesis. Its function is as follows. Involved in the biosynthesis of ADP-glucose, a building block required for the elongation reactions to produce glycogen. Catalyzes the reaction between ATP and alpha-D-glucose 1-phosphate (G1P) to produce pyrophosphate and ADP-Glc. This is Glucose-1-phosphate adenylyltransferase from Desulfitobacterium hafniense (strain DSM 10664 / DCB-2).